The following is a 77-amino-acid chain: uncharacterized protein (77 aa).

This is an uncharacterized protein from Bacillus licheniformis.